A 335-amino-acid chain; its full sequence is UPF0353 protein Mvan_2751 (335 aa).

The next 2 membrane-spanning stretches (helical) occupy residues 18–38 (WFFL…IVQM) and 67–87 (LPAV…AGPT). In terms of domain architecture, VWFA spans 98–294 (VVMLVIDVSQ…EQLKQVFTNL (197 aa)). Residues 309 to 329 (VGWLRIGSLVLALAALGALLI) form a helical membrane-spanning segment.

This sequence belongs to the UPF0353 family.

It localises to the cell membrane. The protein is UPF0353 protein Mvan_2751 of Mycolicibacterium vanbaalenii (strain DSM 7251 / JCM 13017 / BCRC 16820 / KCTC 9966 / NRRL B-24157 / PYR-1) (Mycobacterium vanbaalenii).